The primary structure comprises 307 residues: MDTTPDNSEKKKTSSVREATFSINESFGGRLLTEEEDVFEQNAWDHVEWDDEHLALAKKCIEEQKLYPVTEKDAYMTHPERYWDQFYGKNEGKFFMNRRWIAQEFPELLDLLKEDAGEKSILEIGCGAGNTIWPILKENKNSNLKIFAVDYSEKAIDVVKQNPLYDAKFCSASVWDLAGSDLLRSIEEASIDAITLIFCFSALSPDQWQQAIENLYRLLKPGGLILFRDYGRLDLTQLRAKKNRILSENFYIRGDGTRVYYMTNEELVDVFGKNFKIIQNGVDKRLIVNRKKRVKMYRCWLQAKFQK.

S-adenosyl-L-methionine contacts are provided by tryptophan 83, tyrosine 87, glycine 125, aspartate 150, aspartate 176, leucine 177, and isoleucine 197.

This sequence belongs to the methyltransferase superfamily. METL family.

It carries out the reaction cytidine(32) in tRNA(Thr) + S-adenosyl-L-methionine = N(3)-methylcytidine(32) in tRNA(Thr) + S-adenosyl-L-homocysteine + H(+). Its function is as follows. S-adenosyl-L-methionine-dependent methyltransferase that mediates N(3)-methylcytidine modification of residue 32 of the tRNA anticodon loop of tRNA(Thr). Does not catalyze N(3)-methylcytidine modification of tRNA(Ser). The polypeptide is tRNA N(3)-methylcytidine methyltransferase trm140 (Schizosaccharomyces pombe (strain 972 / ATCC 24843) (Fission yeast)).